A 461-amino-acid chain; its full sequence is MDFTTFHNIIGGKPRGSDNSHSGVDPLTRTTLWPVPTASPQDVDDAVEAAQRALPAWSQASYDERTGLLEKFADLYLSRAGDFCQLLASECGRTVENAAIEVYWAAQWLRYPSSYKLPEEQIEDDTKTAIVTYEPLGVVAAICPWNSIGKIAPALATGNCVILKPSPFTPYTSLKLVELAQEVFPPSVIQVLSGGNGLGPALVKHPGIQKISFTGSTATGKQILKDGADTMKRITLETAGNNPAIILPDIDVTATVPHISGGLWFNAGQVCIAPRRLYIHADIFDVFVDALVETTKEATKEMTKIGPVQNELQFRKLVKTLDDAKSAGHDMATGGPLADAETGGFFLRPTIIKDASPESSIVSGEHFGPIVTCVRFSDADEAVHLANAGESGLAASIWTTNLTAAKALASRLDVGSVYINGPPQPDPRVPFGGHKQSGLGVEYGLQGLLSFCQTKAVYLYK.

215–220 (GSTATG) is an NAD(+) binding site. Active-site residues include E237 and C271.

This sequence belongs to the aldehyde dehydrogenase family.

The enzyme catalyses an aldehyde + NAD(+) + H2O = a carboxylate + NADH + 2 H(+). It participates in mycotoxin biosynthesis. In terms of biological role, aldehyde dehydrogenase; part of the gene cluster that mediates the biosynthesis of the mycotoxin lucilactaene and the lucilactaene-related compound NG-391 that act as cell cycle inhibitors with potent growth inhibitory activity against malarial parasites, moderate growth inhibitory activity against cancer cells, and no activity against bacteria and fungi. LUC3 is important for lucilactaene biosynthesis and performs the oxidation of the C-20 alcoholic analog prelucilactaene G into a carboxylic derivative that has still to be identified. The pathway begins with the hybrid PKS-NRPS synthetase LUC5 which is responsible for the condensation of one acetyl-coenzyme A (CoA) unit with six malonyl-CoA units and the amide linkage of the arising heptaketide and homoserine, subsequently releasing the first intermediate prelucilactaene B. Both the cytochrome P450 monooxygenase LUC2 and the hydrolase LUC6 function in parallel in modification of prelucilactaene B. LUC6 may catalyze the 2-pyrrolidone ring formation to form prelucilactaene C from prelucilactaene B, followed by C-15 hydroxylation by the same enzyme to give prelucilactaene D, which is then converted to prelucilactaene E by epoxidation, and finally to prelucilactaene F by cyclization. Prelucilactane D, prelucilactaene E, and prelucilactaene F can be converted to dihydrolucilactaene, NG391, and lucilactaene, respectively, via C-20 methyl group hydroxylation by the cytochrome P450 monooxygenase LUC2. However, LUC2, unlike FUS8 in fusarin C biosynthesis, is not enough for the full oxidation of the C-20 methyl group into carboxylic acid, which is a prerequisite for the final methylation step. The aldehyde dehydrogenase LUC3 is involved in the biosynthesis by further oxidation of the C-20 alcoholic analog prelucilactaene G into a carboxylic derivative. This unidentified carboxylic derivative may be converted to demethyllucilactaene. As the last step, the methyltransferase LUC1 methylates the hydroxyl group at C-21 of demethyllucilactaene to generate lucilactaene. This chain is Aldehyde dehydrogenase LUC3, found in Fusarium sp.